A 132-amino-acid chain; its full sequence is Heat shock protein 15 homolog (132 aa).

The S4 RNA-binding domain maps to 11–73 (VRLDKWLWAA…DEREVRVLQV (63 aa)). 2 stretches are compositionally biased toward basic and acidic residues: residues 94 to 105 (LKKRAENSEARR) and 114 to 125 (PERRPDKQERRQ). The interval 94–132 (LKKRAENSEARRFNSQFAPSPERRPDKQERRQLIKVKQY) is disordered.

It belongs to the HSP15 family.

In terms of biological role, may play an important role in binding of nucleic acid. More specific for RNA. This Aeromonas salmonicida protein is Heat shock protein 15 homolog (hslR).